We begin with the raw amino-acid sequence, 123 residues long: MPTIQQLVRKGRTDKISKNKTPALKGSPQRRGVCTRVYTTTPKKPNSALRKVARVRLSSGIEVTAYIPGVGHNLQEHSMVLVRGGRVKDLPGVRYKIVRGSLDTQGVKGRKQARSRYGAKKEK.

The tract at residues 1–32 (MPTIQQLVRKGRTDKISKNKTPALKGSPQRRG) is disordered. At aspartate 89 the chain carries 3-methylthioaspartic acid. The disordered stretch occupies residues 103-123 (DTQGVKGRKQARSRYGAKKEK). Residues 108–123 (KGRKQARSRYGAKKEK) show a composition bias toward basic residues.

The protein belongs to the universal ribosomal protein uS12 family. In terms of assembly, part of the 30S ribosomal subunit. Contacts proteins S8 and S17. May interact with IF1 in the 30S initiation complex.

Functionally, with S4 and S5 plays an important role in translational accuracy. Its function is as follows. Interacts with and stabilizes bases of the 16S rRNA that are involved in tRNA selection in the A site and with the mRNA backbone. Located at the interface of the 30S and 50S subunits, it traverses the body of the 30S subunit contacting proteins on the other side and probably holding the rRNA structure together. The combined cluster of proteins S8, S12 and S17 appears to hold together the shoulder and platform of the 30S subunit. The chain is Small ribosomal subunit protein uS12 from Cutibacterium acnes (strain DSM 16379 / KPA171202) (Propionibacterium acnes).